The following is a 248-amino-acid chain: 2,3-bisphosphoglycerate-dependent phosphoglycerate mutase (248 aa).

Substrate contacts are provided by residues 8–15 (RHGESTWN), 21–22 (TG), Arg60, 87–90 (ERHY), Lys98, 114–115 (RR), and 183–184 (GN). Catalysis depends on His9, which acts as the Tele-phosphohistidine intermediate. Glu87 (proton donor/acceptor) is an active-site residue.

The protein belongs to the phosphoglycerate mutase family. BPG-dependent PGAM subfamily. Homodimer.

The enzyme catalyses (2R)-2-phosphoglycerate = (2R)-3-phosphoglycerate. It participates in carbohydrate degradation; glycolysis; pyruvate from D-glyceraldehyde 3-phosphate: step 3/5. Its function is as follows. Catalyzes the interconversion of 2-phosphoglycerate and 3-phosphoglycerate. This Paraburkholderia phytofirmans (strain DSM 17436 / LMG 22146 / PsJN) (Burkholderia phytofirmans) protein is 2,3-bisphosphoglycerate-dependent phosphoglycerate mutase.